The sequence spans 218 residues: Dual specificity protein phosphatase TpbA (218 aa).

The N-terminal stretch at 1-28 (MHRSPLAWLRLLLAAVLGAFLLGGPLHA) is a signal peptide. The Tyrosine-protein phosphatase domain occupies 44 to 188 (DPSINLYRMS…YVRGADVDGL (145 aa)). Residue Asp-105 is the Proton donor/acceptor of the active site. The active-site Phosphocysteine intermediate is Cys-132.

Belongs to the protein-tyrosine phosphatase family.

The protein localises to the periplasm. The enzyme catalyses O-phospho-L-tyrosyl-[protein] + H2O = L-tyrosyl-[protein] + phosphate. It carries out the reaction O-phospho-L-threonyl-[protein] + H2O = L-threonyl-[protein] + phosphate. It catalyses the reaction O-phospho-L-seryl-[protein] + H2O = L-seryl-[protein] + phosphate. Its function is as follows. Phosphatase that regulates diverse phenotypes in P.aeruginosa via regulation of the concentration of cellular c-di-GMP. Acts by dephosphorylating the membrane-anchored diguanylate cyclase TpbB at tyrosine and serine/threonine sites, leading to inactivation of TpbB and reduced c-di-GMP production. In vitro shows phosphatase activity toward p-nitrophenyl phosphate (pNPP) and tyrosine phosphopeptides. Can efficiently dephosphorylate two phosphorylated peptides derived from the periplasmic domain of TpbB, with a strong preference for Tyr-48 over Tyr-62. This is Dual specificity protein phosphatase TpbA from Pseudomonas aeruginosa (strain ATCC 15692 / DSM 22644 / CIP 104116 / JCM 14847 / LMG 12228 / 1C / PRS 101 / PAO1).